The sequence spans 310 residues: Homoserine kinase (310 aa).

ATP is bound at residue 85–95; it reads PKGLGLGSSGA.

The protein belongs to the GHMP kinase family. Homoserine kinase subfamily.

The protein localises to the cytoplasm. The enzyme catalyses L-homoserine + ATP = O-phospho-L-homoserine + ADP + H(+). It functions in the pathway amino-acid biosynthesis; L-threonine biosynthesis; L-threonine from L-aspartate: step 4/5. Functionally, catalyzes the ATP-dependent phosphorylation of L-homoserine to L-homoserine phosphate. The protein is Homoserine kinase of Thermoplasma acidophilum (strain ATCC 25905 / DSM 1728 / JCM 9062 / NBRC 15155 / AMRC-C165).